A 413-amino-acid chain; its full sequence is Aspartate aminotransferase, cytoplasmic (413 aa).

Residues G39 and W141 each contribute to the L-aspartate site. Position 149 is a phosphoserine (S149). Residue N195 participates in L-aspartate binding. An N6-(pyridoxal phosphate)lysine modification is found at K259. At K318 the chain carries N6-succinyllysine. Position 387 (R387) interacts with L-aspartate.

The protein belongs to the class-I pyridoxal-phosphate-dependent aminotransferase family. Homodimer. Pyridoxal 5'-phosphate serves as cofactor. As to expression, expressed in neurons of the retina. Localizes to the inner and outer plexiform layers, the inner and outer nuclear layer and the outer segments of photoreceptors.

The protein localises to the cytoplasm. It carries out the reaction L-aspartate + 2-oxoglutarate = oxaloacetate + L-glutamate. The enzyme catalyses L-cysteine + 2-oxoglutarate = 2-oxo-3-sulfanylpropanoate + L-glutamate. The catalysed reaction is (2S)-2-aminobutanoate + 2-oxoglutarate = 2-oxobutanoate + L-glutamate. It catalyses the reaction 3-sulfino-L-alanine + 2-oxoglutarate = 3-sulfinopyruvate + L-glutamate. Inhibited by calcium ions. Its function is as follows. Biosynthesis of L-glutamate from L-aspartate or L-cysteine. Important regulator of levels of glutamate, the major excitatory neurotransmitter of the vertebrate central nervous system. Acts as a scavenger of glutamate in brain neuroprotection. The aspartate aminotransferase activity is involved in hepatic glucose synthesis during development and in adipocyte glyceroneogenesis. Using L-cysteine as substrate, regulates levels of mercaptopyruvate, an important source of hydrogen sulfide. Mercaptopyruvate is converted into H(2)S via the action of 3-mercaptopyruvate sulfurtransferase (3MST). Hydrogen sulfide is an important synaptic modulator and neuroprotectant in the brain. The polypeptide is Aspartate aminotransferase, cytoplasmic (Mus musculus (Mouse)).